The sequence spans 361 residues: Chorismate synthase (361 aa).

Residue Arg48 participates in NADP(+) binding. Residues 126–128 (RFS), Gly286, 301–305 (KPTPS), and Arg328 each bind FMN.

This sequence belongs to the chorismate synthase family. The cofactor is FMNH2.

The enzyme catalyses 5-O-(1-carboxyvinyl)-3-phosphoshikimate = chorismate + phosphate. Its pathway is metabolic intermediate biosynthesis; chorismate biosynthesis; chorismate from D-erythrose 4-phosphate and phosphoenolpyruvate: step 7/7. Functionally, catalyzes the anti-1,4-elimination of the C-3 phosphate and the C-6 proR hydrogen from 5-enolpyruvylshikimate-3-phosphate (EPSP) to yield chorismate, which is the branch point compound that serves as the starting substrate for the three terminal pathways of aromatic amino acid biosynthesis. This reaction introduces a second double bond into the aromatic ring system. This chain is Chorismate synthase, found in Korarchaeum cryptofilum (strain OPF8).